A 299-amino-acid polypeptide reads, in one-letter code: uncharacterized protein (299 aa).

Residues 1-44 (MSDSNLTNPIKAFFHDEFPEQYQEPPGLQKNMKPVPDCGEKSYK) form a disordered region. 55–79 (LVTGGDSGIGRAAAIAYAREGADVA) contributes to the NADP(+) binding site. S188 lines the substrate pocket. Y201 (proton acceptor) is an active-site residue.

It belongs to the short-chain dehydrogenases/reductases (SDR) family.

This is an uncharacterized protein from Bacillus subtilis (strain 168).